A 126-amino-acid chain; its full sequence is Small ribosomal subunit protein uS13 (126 aa).

The tract at residues 98 to 126 (PVRGQSTKNNARTRKGRKKTVANKKKATK) is disordered. The segment covering 108–126 (ARTRKGRKKTVANKKKATK) has biased composition (basic residues).

Belongs to the universal ribosomal protein uS13 family. Part of the 30S ribosomal subunit. Forms a loose heterodimer with protein S19. Forms two bridges to the 50S subunit in the 70S ribosome.

Functionally, located at the top of the head of the 30S subunit, it contacts several helices of the 16S rRNA. In the 70S ribosome it contacts the 23S rRNA (bridge B1a) and protein L5 of the 50S subunit (bridge B1b), connecting the 2 subunits; these bridges are implicated in subunit movement. Contacts the tRNAs in the A and P-sites. In Phocaeicola vulgatus (strain ATCC 8482 / DSM 1447 / JCM 5826 / CCUG 4940 / NBRC 14291 / NCTC 11154) (Bacteroides vulgatus), this protein is Small ribosomal subunit protein uS13.